Reading from the N-terminus, the 340-residue chain is Manganese-dependent ADP-ribose/CDP-alcohol diphosphatase (340 aa).

The residue at position 1 (Met-1) is an N-acetylmethionine. Zn(2+) contacts are provided by Asp-25, Gln-27, Asp-74, Asn-110, His-241, His-278, and His-280.

This sequence belongs to the ADPRibase-Mn family. As to quaternary structure, monomer. Mg(2+) serves as cofactor.

The enzyme catalyses CDP-choline + H2O = phosphocholine + CMP + 2 H(+). It carries out the reaction ADP-D-ribose + H2O = D-ribose 5-phosphate + AMP + 2 H(+). It catalyses the reaction CDP-glycerol + H2O = sn-glycerol 3-phosphate + CMP + 2 H(+). Its function is as follows. Hydrolyzes ADP-ribose, IDP-ribose, CDP-glycerol, CDP-choline and CDP-ethanolamine, but not other non-reducing ADP-sugars or CDP-glucose. May be involved in immune cell signaling as suggested by the second-messenger role of ADP-ribose, which activates TRPM2 as a mediator of oxidative/nitrosative stress. This chain is Manganese-dependent ADP-ribose/CDP-alcohol diphosphatase (Adprm), found in Mus musculus (Mouse).